Here is a 122-residue protein sequence, read N- to C-terminus: Large ribosomal subunit protein bL12 (122 aa).

This sequence belongs to the bacterial ribosomal protein bL12 family. In terms of assembly, homodimer. Part of the ribosomal stalk of the 50S ribosomal subunit. Forms a multimeric L10(L12)X complex, where L10 forms an elongated spine to which 2 to 4 L12 dimers bind in a sequential fashion. Binds GTP-bound translation factors.

Functionally, forms part of the ribosomal stalk which helps the ribosome interact with GTP-bound translation factors. Is thus essential for accurate translation. This chain is Large ribosomal subunit protein bL12, found in Mycoplasma pneumoniae (strain ATCC 29342 / M129 / Subtype 1) (Mycoplasmoides pneumoniae).